The chain runs to 373 residues: 1-deoxy-D-xylulose 5-phosphate reductoisomerase (373 aa).

The NADPH site is built by Thr-10, Gly-11, Ser-12, Ile-13, Arg-37, and Asn-112. Lys-113 contributes to the 1-deoxy-D-xylulose 5-phosphate binding site. Glu-114 serves as a coordination point for NADPH. Asp-134 is a binding site for Mn(2+). 1-deoxy-D-xylulose 5-phosphate contacts are provided by Ser-135, Glu-136, Ser-160, and His-183. Residue Glu-136 participates in Mn(2+) binding. Residue Gly-189 participates in NADPH binding. 1-deoxy-D-xylulose 5-phosphate is bound by residues Ser-196, Asn-201, Lys-202, and Glu-205. Glu-205 lines the Mn(2+) pocket.

The protein belongs to the DXR family. Mg(2+) serves as cofactor. The cofactor is Mn(2+).

The catalysed reaction is 2-C-methyl-D-erythritol 4-phosphate + NADP(+) = 1-deoxy-D-xylulose 5-phosphate + NADPH + H(+). The protein operates within isoprenoid biosynthesis; isopentenyl diphosphate biosynthesis via DXP pathway; isopentenyl diphosphate from 1-deoxy-D-xylulose 5-phosphate: step 1/6. Functionally, catalyzes the NADPH-dependent rearrangement and reduction of 1-deoxy-D-xylulose-5-phosphate (DXP) to 2-C-methyl-D-erythritol 4-phosphate (MEP). The protein is 1-deoxy-D-xylulose 5-phosphate reductoisomerase of Persephonella marina (strain DSM 14350 / EX-H1).